An 85-amino-acid chain; its full sequence is MQFTKLATVLIVSLMGSAAIAAPSVDNAPAVAAEEVAAAPAENLEKRGFGCPLNERECHSHCQSIGRKFGYCGGTLRLTCICGKE.

The first 21 residues, 1–21 (MQFTKLATVLIVSLMGSAAIA), serve as a signal peptide directing secretion. A propeptide spanning residues 22–47 (APSVDNAPAVAAEEVAAAPAENLEKR) is cleaved from the precursor. 3 cysteine pairs are disulfide-bonded: Cys-51–Cys-72, Cys-58–Cys-80, and Cys-62–Cys-82.

The protein belongs to the invertebrate defensin family. Disulfide bonds are essential for antimicrobial activity.

The protein localises to the secreted. Antimicrobial peptide with broad-spectrum activity against Gram-positive bacteria, Gram-negative bacteria, and fungi. Also inhibits clinical isolates, including methicillin-resistant S.aureus (MRSA) (MIC=32 uM), K.pneumoniae, C.albicans and C.parapsilosis. Displays minimal inhibitory concentration (MIC) values similar to minimal bactericidal concentrations (MBC), suggesting a disruptive mechanism mode of action associated with membrane lysis. In vitro, shows hemolytic activity against human red blood cells. The sequence is that of Fungal defensin triintsin from Trichophyton interdigitale (strain MR816).